The following is a 347-amino-acid chain: Gamma-glutamyl hydrolase B (347 aa).

A signal peptide spans M1 to T22. Residues I23 to N314 form the Gamma-glutamyl hydrolase domain. Catalysis depends on C128, which acts as the Nucleophile. N-linked (GlcNAc...) asparagine glycosylation is found at N152, N158, and N201. H240 serves as the catalytic Proton donor. N273, N314, and N318 each carry an N-linked (GlcNAc...) asparagine glycan.

Belongs to the peptidase C26 family.

The protein resides in the secreted. It is found in the extracellular space. It catalyses the reaction (6S)-5,6,7,8-tetrahydrofolyl-(gamma-L-Glu)(n) + (n-1) H2O = (6S)-5,6,7,8-tetrahydrofolate + (n-1) L-glutamate. This Dictyostelium discoideum (Social amoeba) protein is Gamma-glutamyl hydrolase B (gghB).